The chain runs to 333 residues: CMP-N-acetylneuraminate-beta-galactosamide-alpha-2,3-sialyltransferase 4 (333 aa).

Residues 1 to 8 (MTSKSHWK) are Cytoplasmic-facing. A helical; Signal-anchor for type II membrane protein transmembrane segment spans residues 9–26 (LLALALVLVVVMVWYSIS). The Lumenal segment spans residues 27–333 (REDRYIEFFY…MGAVKNLTYF (307 aa)). N-linked (GlcNAc...) asparagine glycosylation is found at Asn-61, Asn-131, Asn-310, and Asn-329. Cys-120 and Cys-273 are joined by a disulfide.

It belongs to the glycosyltransferase 29 family. Broadly expressed among tissues with highest levels in the small intestine and colon.

The protein resides in the golgi apparatus. The protein localises to the golgi stack membrane. It carries out the reaction a beta-D-galactosyl-(1-&gt;3)-N-acetyl-beta-D-galactosaminyl derivative + CMP-N-acetyl-beta-neuraminate = an N-acetyl-alpha-neuraminyl-(2-&gt;3)-beta-D-galactosyl-(1-&gt;3)-N-acetyl-beta-D-galactosaminyl derivative + CMP + H(+). The enzyme catalyses a beta-D-galactosyl-(1-&gt;3)-N-acetyl-alpha-D-galactosaminyl derivative + CMP-N-acetyl-beta-neuraminate = an N-acetyl-alpha-neuraminyl-(2-&gt;3)-beta-D-galactosyl-(1-&gt;3)-N-acetyl-alpha-D-galactosaminyl derivative + CMP + H(+). The catalysed reaction is a beta-D-galactosyl-(1-&gt;4)-N-acetyl-beta-D-glucosaminyl derivative + CMP-N-acetyl-beta-neuraminate = an N-acetyl-alpha-neuraminyl-(2-&gt;3)-beta-D-galactosyl-(1-&gt;4)-N-acetyl-beta-D-glucosaminyl derivative + CMP + H(+). It catalyses the reaction a ganglioside GM1 (d18:1(4E)) + CMP-N-acetyl-beta-neuraminate = a ganglioside GD1a (d18:1(4E)) + CMP + H(+). It carries out the reaction a ganglioside GA1 (d18:1(4E)) + CMP-N-acetyl-beta-neuraminate = a ganglioside GM1b (d18:1(4E)) + CMP + H(+). The enzyme catalyses a ganglioside GT1c (d18:1(4E)) + CMP-N-acetyl-beta-neuraminate = a ganglioside GQ1c (d18:1(4E)) + CMP + H(+). The catalysed reaction is a neolactoside nLc4Cer + CMP-N-acetyl-beta-neuraminate = a neolactoside IV(3)-alpha-NeuAc-nLc4Cer + CMP + H(+). It catalyses the reaction a neolactoside nLc4Cer(d18:1(4E)) + CMP-N-acetyl-beta-neuraminate = a neolactoside IV(3)-alpha-NeuAc-nLc4Cer(d18:1(4E)) + CMP + H(+). Its pathway is protein modification; protein glycosylation. A beta-galactoside alpha2-3 sialyltransferase involved in terminal sialylation of glycoproteins and glycolipids. Catalyzes the transfer of sialic acid (N-acetyl-neuraminic acid; Neu5Ac) from the nucleotide sugar donor CMP-Neu5Ac onto acceptor Galbeta-(1-&gt;3)-GalNAc- and Galbeta-(1-&gt;4)-GlcNAc-terminated glycoconjugates through an alpha2-3 linkage. Plays a major role in hemostasis. Responsible for sialylation of plasma VWF/von Willebrand factor, preventing its recognition by asialoglycoprotein receptors (ASGPR) and subsequent clearance. Regulates ASGPR-mediated clearance of platelets. Participates in the biosynthesis of the sialyl Lewis X epitopes, both on O- and N-glycans, which are recognized by SELE/E-selectin, SELP/P-selectin and SELL/L-selectin. Essential for selectin-mediated rolling and adhesion of leukocytes during extravasation. Contributes to adhesion and transendothelial migration of neutrophils likely through terminal sialylation of CXCR2. In glycosphingolipid biosynthesis, sialylates GM1 and GA1 gangliosides to form GD1a and GM1b, respectively. Metabolizes brain c-series ganglioside GT1c forming GQ1c. Synthesizes ganglioside LM1 (IV3Neu5Ac-nLc4Cer), a major structural component of peripheral nerve myelin. This Mus musculus (Mouse) protein is CMP-N-acetylneuraminate-beta-galactosamide-alpha-2,3-sialyltransferase 4 (St3gal4).